The following is a 516-amino-acid chain: 2-isopropylmalate synthase (516 aa).

In terms of domain architecture, Pyruvate carboxyltransferase spans 5–267 (VIIFDTTLRD…TTGIKHDEIS (263 aa)). Residues Asp-14, His-202, His-204, and Asn-238 each coordinate Mn(2+). The interval 392-516 (KLNYLSVQSG…IKQKKSVATV (125 aa)) is regulatory domain.

Belongs to the alpha-IPM synthase/homocitrate synthase family. LeuA type 1 subfamily. As to quaternary structure, homodimer. Requires Mn(2+) as cofactor.

Its subcellular location is the cytoplasm. It carries out the reaction 3-methyl-2-oxobutanoate + acetyl-CoA + H2O = (2S)-2-isopropylmalate + CoA + H(+). The protein operates within amino-acid biosynthesis; L-leucine biosynthesis; L-leucine from 3-methyl-2-oxobutanoate: step 1/4. Its function is as follows. Catalyzes the condensation of the acetyl group of acetyl-CoA with 3-methyl-2-oxobutanoate (2-ketoisovalerate) to form 3-carboxy-3-hydroxy-4-methylpentanoate (2-isopropylmalate). The chain is 2-isopropylmalate synthase from Vibrio cholerae serotype O1 (strain ATCC 39315 / El Tor Inaba N16961).